We begin with the raw amino-acid sequence, 140 residues long: Ribosome maturation factor RimP (140 aa).

Belongs to the RimP family.

It is found in the cytoplasm. Functionally, required for maturation of 30S ribosomal subunits. The protein is Ribosome maturation factor RimP of Campylobacter lari (strain RM2100 / D67 / ATCC BAA-1060).